The following is a 436-amino-acid chain: p-aminobenzoyl-glutamate hydrolase subunit A (436 aa).

It belongs to the peptidase M20 family. Forms a heterodimer with AbgB. The cofactor is Mn(2+).

Component of the p-aminobenzoyl-glutamate hydrolase multicomponent enzyme system which catalyzes the cleavage of p-aminobenzoyl-glutamate (PABA-GLU) to form p-aminobenzoate (PABA) and glutamate. AbgAB does not degrade dipeptides and the physiological role of abgABT should be clarified. The protein is p-aminobenzoyl-glutamate hydrolase subunit A (abgA) of Escherichia coli (strain K12).